The primary structure comprises 478 residues: MGSGWSSEEEERQPLLGPGLGPAPGAARRGREATAVLPAAGPNPGRVYGRRWLVLLLFSLLAFAQGLVWNTWGPIQNSARQAYGFSGWDIALLVLWGPIGFLPCFAFMWLLDKRGLRVTVLLTSFLMVLGTGLRCIPVSDLALKKRLIHGGQILNGLAGPTVMNAAPFLSTTWFSADERATATAIASMLSYLGGACAFLVGPLVVPAPNGTAPLLAAESSRAHIKDRIETVLYAEFGVVCLIFSATLAYFPPRPPLPPSVAAASQRLSYRRSFCRLLSNLRFLMIALAYAIPLGVFAGWSGVLDLILTPVHVSQVDAGWIGFWSIVGGCVVGIAMARFADFIRGMLKLILLLLFSGATLSSTWFTLTCLNSITHLPLTTVTLYASCILLGVFLNSSVPIFFELFVETVYPVPEGITCGVVTFLSNMFMGVLLFFVTFYHTELSWFNWCLPGSCLLSLLLILCFRESYDRLYLDVVVSV.

Residues 1–27 (MGSGWSSEEEERQPLLGPGLGPAPGAA) form a disordered region. The Cytoplasmic segment spans residues 1–51 (MGSGWSSEEEERQPLLGPGLGPAPGAARRGREATAVLPAAGPNPGRVYGRR). The short motif at 15–16 (LL) is the Di-leucine motif; mediates lysosomal localization element. The chain crosses the membrane as a helical span at residues 52 to 72 (WLVLLLFSLLAFAQGLVWNTW). The Lumenal segment spans residues 73-89 (GPIQNSARQAYGFSGWD). A helical transmembrane segment spans residues 90–110 (IALLVLWGPIGFLPCFAFMWL). At 111–117 (LDKRGLR) the chain is on the cytoplasmic side. A helical membrane pass occupies residues 118–138 (VTVLLTSFLMVLGTGLRCIPV). The Lumenal segment spans residues 139-152 (SDLALKKRLIHGGQ). The helical transmembrane segment at 153 to 173 (ILNGLAGPTVMNAAPFLSTTW) threads the bilayer. Residues 174–184 (FSADERATATA) are Cytoplasmic-facing. Residues 185-205 (IASMLSYLGGACAFLVGPLVV) form a helical membrane-spanning segment. At 206 to 229 (PAPNGTAPLLAAESSRAHIKDRIE) the chain is on the lumenal side. N-linked (GlcNAc...) asparagine glycosylation occurs at asparagine 209. A helical membrane pass occupies residues 230–250 (TVLYAEFGVVCLIFSATLAYF). Over 251-281 (PPRPPLPPSVAAASQRLSYRRSFCRLLSNLR) the chain is Cytoplasmic. The chain crosses the membrane as a helical span at residues 282-302 (FLMIALAYAIPLGVFAGWSGV). Residues 303 to 314 (LDLILTPVHVSQ) lie on the Lumenal side of the membrane. Residues 315 to 335 (VDAGWIGFWSIVGGCVVGIAM) form a helical membrane-spanning segment. Topologically, residues 336–347 (ARFADFIRGMLK) are cytoplasmic. Residues 348–368 (LILLLLFSGATLSSTWFTLTC) traverse the membrane as a helical segment. The Lumenal portion of the chain corresponds to 369–384 (LNSITHLPLTTVTLYA). The helical transmembrane segment at 385–405 (SCILLGVFLNSSVPIFFELFV) threads the bilayer. Over 406 to 414 (ETVYPVPEG) the chain is Cytoplasmic. The helical transmembrane segment at 415–435 (ITCGVVTFLSNMFMGVLLFFV) threads the bilayer. Topologically, residues 436-442 (TFYHTEL) are lumenal. The helical transmembrane segment at 443-463 (SWFNWCLPGSCLLSLLLILCF) threads the bilayer. Topologically, residues 464–478 (RESYDRLYLDVVVSV) are cytoplasmic.

Belongs to the major facilitator superfamily. In terms of processing, cleaved in lysosomes by cathepsin L between Leu-214 and Ala-261, generating a N-glycosylated N-terminal and a non-glycosylated C-terminal fragment.

Its subcellular location is the lysosome membrane. It carries out the reaction pyridoxine(out) + n H(+)(out) = pyridoxine(in) + n H(+)(in). Mediates H(+)-dependent pyridoxine transport. This chain is Solute carrier family 49 member 4 (Slc49a4), found in Mus musculus (Mouse).